A 442-amino-acid chain; its full sequence is Histidine--tRNA ligase (442 aa).

The disordered stretch occupies residues 416–442 (SGDETTVPVEEFPPEGGEELPTYEDYE). Residues 427-442 (FPPEGGEELPTYEDYE) show a composition bias toward acidic residues.

The protein belongs to the class-II aminoacyl-tRNA synthetase family.

It is found in the cytoplasm. The catalysed reaction is tRNA(His) + L-histidine + ATP = L-histidyl-tRNA(His) + AMP + diphosphate + H(+). This chain is Histidine--tRNA ligase, found in Halorubrum lacusprofundi (strain ATCC 49239 / DSM 5036 / JCM 8891 / ACAM 34).